Here is an 86-residue protein sequence, read N- to C-terminus: Small ribosomal subunit protein bS20 (86 aa).

The protein belongs to the bacterial ribosomal protein bS20 family.

Functionally, binds directly to 16S ribosomal RNA. This is Small ribosomal subunit protein bS20 from Aliarcobacter butzleri (strain RM4018) (Arcobacter butzleri).